Reading from the N-terminus, the 88-residue chain is Class II hydrophobin 5 (88 aa).

Residues 1–14 (MQFLVLALASLAAA) form the signal peptide. 4 disulfide bridges follow: Cys-27–Cys-73, Cys-35–Cys-64, Cys-36–Cys-48, and Cys-74–Cys-85.

The protein belongs to the cerato-ulmin hydrophobin family. As to quaternary structure, homotetramer. Further self-assembles to form highly ordered films at water-air interfaces through intermolecular interactions. As to expression, only appears on young aerial hyphae. HCf-5 is the most abundant transcript in sporulating mycelium.

It localises to the secreted. It is found in the cell wall. In terms of biological role, aerial growth, conidiation, and dispersal of filamentous fungi in the environment rely upon a capability of their secreting small amphipathic proteins called hydrophobins (HPBs) with low sequence identity. Class I can self-assemble into an outermost layer of rodlet bundles on aerial cell surfaces, conferring cellular hydrophobicity that supports fungal growth, development and dispersal; whereas Class II form highly ordered films at water-air interfaces through intermolecular interactions but contribute nothing to the rodlet structure. The protein is Class II hydrophobin 5 of Passalora fulva (Tomato leaf mold).